The primary structure comprises 316 residues: Cysteine synthase (316 aa).

Hydrogen sulfide-binding residues include N7 and R35. At K42 the chain carries N6-(pyridoxal phosphate)lysine. Pyridoxal 5'-phosphate-binding positions include N72 and 177–181 (GTGGS). Position 268 (L268) interacts with hydrogen sulfide. S272 contributes to the pyridoxal 5'-phosphate binding site.

This sequence belongs to the cysteine synthase/cystathionine beta-synthase family. Homodimer. The cofactor is pyridoxal 5'-phosphate.

It catalyses the reaction O-acetyl-L-serine + hydrogen sulfide = L-cysteine + acetate. Its pathway is amino-acid biosynthesis; L-cysteine biosynthesis; L-cysteine from L-serine: step 2/2. This is Cysteine synthase (cysK) from Haemophilus influenzae (strain ATCC 51907 / DSM 11121 / KW20 / Rd).